The following is a 157-amino-acid chain: Transcription elongation factor GreA (157 aa).

The stretch at 12 to 74 (LKKLEEELEY…TLEAMLKNAK (63 aa)) forms a coiled coil.

It belongs to the GreA/GreB family.

In terms of biological role, necessary for efficient RNA polymerase transcription elongation past template-encoded arresting sites. The arresting sites in DNA have the property of trapping a certain fraction of elongating RNA polymerases that pass through, resulting in locked ternary complexes. Cleavage of the nascent transcript by cleavage factors such as GreA or GreB allows the resumption of elongation from the new 3'terminus. GreA releases sequences of 2 to 3 nucleotides. The chain is Transcription elongation factor GreA from Caldanaerobacter subterraneus subsp. tengcongensis (strain DSM 15242 / JCM 11007 / NBRC 100824 / MB4) (Thermoanaerobacter tengcongensis).